We begin with the raw amino-acid sequence, 85 residues long: Conotoxin Im28.1 (85 aa).

An N-terminal signal peptide occupies residues 1-21 (MPKLEMMLLVLLILPLCYIDA). Positions 22 to 40 (VGPPPPWNMEDEIIEHWQK) are excised as a propeptide.

Belongs to the conotoxin D superfamily. Post-translationally, contains 5 disulfide bonds. As to expression, expressed by the venom duct.

It localises to the secreted. Its function is as follows. Probable neurotoxin. The chain is Conotoxin Im28.1 from Conus imperialis (Imperial cone).